Reading from the N-terminus, the 262-residue chain is Small ribosomal subunit protein mS23 (262 aa).

A disordered region spans residues 211-262 (SGQSDEAPEGEGSDMSAGEYDMAVEELAGQGSIPNTPQSTVVPEGTSAPAHA). Polar residues predominate over residues 242 to 251 (SIPNTPQSTV).

This sequence belongs to the mitochondrion-specific ribosomal protein mS23 family. Component of the mitochondrial small ribosomal subunit.

It localises to the mitochondrion. This Phaeosphaeria nodorum (strain SN15 / ATCC MYA-4574 / FGSC 10173) (Glume blotch fungus) protein is Small ribosomal subunit protein mS23 (RSM25).